Reading from the N-terminus, the 1963-residue chain is MEHEKDPGWQYLRRTREQVLEDQSKPYDSKKNVWIPDPEEGYLAGEITATKGDQVTIVTARGNEVTLKKELVQEMNPPKFEKTEDMSNLSFLNDASVLHNLRSRYAAMLIYTYSGLFCVVINPYKRLPIYTDSCARMFMGKRKTEMPPHLFAVSDEAYRNMLQDHENQSMLITGESGAGKTENTKKVICYFAAVGASQQEGGAEVDPNKKKVTLEDQIVQTNPVLEAFGNAKTVRNNNSSRFGKFIRIHFNKHGRLASCDIEHYLLEKSRVIRQAPGERCYHIFYQIYSDFRPELKKELLLDLPIKDYWFVAQAELIIDGIDDVEEFQLTDEAFDILNFSAVEKQDCYRLMSAHMHMGNMKFKQRPREEQAEPDGTDEAEKASNMYGIGCEEFLKALTKPRVKVGTEWVSKGQNCEQVNWAVGAMAKGLYSRVFNWLVKKCNLTLDQKGIDRDYFIGVLDIAGFEIFDFNSFEQLWINFVNEKLQQFFNHHMFVLEQEEYAREGIQWVFIDFGLDLQACIELIEKPLGIISMLDEECIVPKATDLTLASKLVDQHLGKHPNFEKPKPPKGKQGEAHFAMRHYAGTVRYNCLNWLEKNKDPLNDTVVSAMKQSKGNDLLVEIWQDYTTQEEAAAKAKEGGGGGKKKGKSGSFMTVSMLYRESLNNLMTMLNKTHPHFIRCIIPNEKKQSGMIDAALVLNQLTCNGVLEGIRICRKGFPNRTLHPDFVQRYAILAAKEAKSDDDKKKCAEAIMSKLVNDGSLSEEMFRIGLTKVFFKAGVLAHLEDIRDEKLATILTGFQSQIRWHLGLKDRKRRMEQRAGLLIVQRNVRSWCTLRTWEWFKLYGKVKPMLKAGKEAEELEKINDKVKALEDSLAKEEKLRKELEESSAKLVEEKTSLFTNLESTKTQLSDAEERLAKLEAQQKDASKQLSELNDQLADNEDRTADVQRAKKKIEAEVEALKKQIQDLEMSLRKAESEKQSKDHQIRSLQDEMQQQDEAIAKLNKEKKHQEEINRKLMEDLQSEEDKGNHQNKVKAKLEQTLDDLEDSLEREKRARADLDKQKRKVEGELKIAQENIDESGRQRHDLENNLKKKESELHSVSSRLEDEQALVSKLQRQIKDGQSRISELEEELENERQSRSKADRAKSDLQRELEELGEKLDEQGGATAAQVEVNKKREAELAKLRRDLEEANMNHENQLGGLRKKHTDAVAELTDQLDQLNKAKAKVEKDKAQAVRDAEDLAAQLDQETSGKLNNEKLAKQFELQLTELQSKADEQSRQLQDFTSLKGRLHSENGDLVRQLEDAESQVNQLTRLKSQLTSQLEEARRTADEEARERQTVAAQAKNYQHEAEQLQESLEEEIEGKNEILRQLSKANADIQQWKARFEGEGLLKADELEDAKRRQAQKINELQEALDAANSKNASLEKTKSRLVGDLDDAQVDVERANGVASALEKKQKGFDKIIDEWRKKTDDLAAELDGAQRDLRNTSTDLFKAKNAQEELAEVVEGLRRENKSLSQEIKDLTDQLGEGGRSVHEMQKIIRRLEIEKEELQHALDEAEAALEAEESKVLRAQVEVSQIRSEIEKRIQEKEEEFENTRKNHARALESMQASLETEAKGKAELLRIKKKLEGDINELEIALDHANKANADAQKNLKRYQEQVRELQLQVEEEQRNGADTREQFFNAEKRATLLQSEKEELLVANEAAERARKQAEYEAADARDQANEANAQVSSLTSAKRKLEGEIQAIHADLDETLNEYKAAEERSKKAIADATRLAEELRQEQEHSQHVDRLRKGLEQQLKEIQVRLDEAEAAALKGGKKVIAKLEQRVRELESELDGEQRRFQDANKNLGRADRRVRELQFQVDEDKKNFERLQDLIDKLQQKLKTQKKQVEEAEELANLNLQKYKQLTHQLEDAEERADQAENSLSKMRSKSRASASVAPGLQSSASAAVIRSPSRARASDF.

One can recognise a Myosin N-terminal SH3-like domain in the interval 28 to 77 (DSKKNVWIPDPEEGYLAGEITATKGDQVTIVTARGNEVTLKKELVQEMNP). Residues 81–787 (EKTEDMSNLS…VLAHLEDIRD (707 aa)) enclose the Myosin motor domain. Lysine 125 is modified (N6,N6,N6-trimethyllysine). 174–181 (GESGAGKT) is an ATP binding site. Actin-binding regions lie at residues 662 to 684 (LNNL…IPNE) and 766 to 780 (RIGL…GVLA). Residues 848-1161 (MLKAGKEAEE…LEELGEKLDE (314 aa)) form an alpha-helical tailpiece (S2) region. Residues 848–1963 (MLKAGKEAEE…SPSRARASDF (1116 aa)) adopt a coiled-coil conformation. Basic and acidic residues-rich tracts occupy residues 970 to 988 (LRKA…RSLQ) and 1133 to 1146 (NERQ…RAKS). Disordered stretches follow at residues 970–990 (LRKA…LQDE) and 1125–1146 (SELE…RAKS). Residues 1162–1173 (QGGATAAQVEVN) are hinge. The tract at residues 1162 to 1963 (QGGATAAQVE…SPSRARASDF (802 aa)) is light meromyosin (LMM). 2 disordered regions span residues 1317–1336 (LTSQ…RERQ) and 1912–1963 (LEDA…ASDF). Basic and acidic residues predominate over residues 1322-1336 (EEARRTADEEARERQ).

This sequence belongs to the TRAFAC class myosin-kinesin ATPase superfamily. Myosin family. Muscle myosin is a hexameric protein that consists of 2 heavy chain subunits (MHC), 2 alkali light chain subunits (MLC) and 2 regulatory light chain subunits (MLC-2). Forms a complex composed of chaperone unc-45, unc-54 and ubiquitin-protein ligase ufd-2; promotes poly-ubiquitination of unfolded unc-54. Within the complex interacts with unc-45 (via UCS domain) and ufd-2. Interacts with itr-1 (via c-terminal coiled coil domain). Unfolded unc-54 is poly-ubiquitinated by ufd-2.

The protein resides in the cytoplasm. It is found in the myofibril. In terms of biological role, required for muscle contraction. The polypeptide is Myosin-4 (unc-54) (Caenorhabditis elegans).